The following is a 196-amino-acid chain: Peptidyl-tRNA hydrolase (196 aa).

Y17 contacts tRNA. The Proton acceptor role is filled by H22. Residues F68, N70, and N116 each coordinate tRNA.

It belongs to the PTH family. As to quaternary structure, monomer.

It is found in the cytoplasm. It carries out the reaction an N-acyl-L-alpha-aminoacyl-tRNA + H2O = an N-acyl-L-amino acid + a tRNA + H(+). In terms of biological role, hydrolyzes ribosome-free peptidyl-tRNAs (with 1 or more amino acids incorporated), which drop off the ribosome during protein synthesis, or as a result of ribosome stalling. Its function is as follows. Catalyzes the release of premature peptidyl moieties from peptidyl-tRNA molecules trapped in stalled 50S ribosomal subunits, and thus maintains levels of free tRNAs and 50S ribosomes. The polypeptide is Peptidyl-tRNA hydrolase (Serratia proteamaculans (strain 568)).